Reading from the N-terminus, the 71-residue chain is UPF0499 protein ACLA_083080 (71 aa).

The signal sequence occupies residues 1–18 (MKFLNILTLAFITGMASA). Cystine bridges form between C44–C58, C48–C61, and C54–C68.

Belongs to the UPF0499 family.

The protein resides in the secreted. The chain is UPF0499 protein ACLA_083080 from Aspergillus clavatus (strain ATCC 1007 / CBS 513.65 / DSM 816 / NCTC 3887 / NRRL 1 / QM 1276 / 107).